The following is a 95-amino-acid chain: Large ribosomal subunit protein bL25 (95 aa).

It belongs to the bacterial ribosomal protein bL25 family. As to quaternary structure, part of the 50S ribosomal subunit; part of the 5S rRNA/L5/L18/L25 subcomplex. Contacts the 5S rRNA. Binds to the 5S rRNA independently of L5 and L18.

This is one of the proteins that binds to the 5S RNA in the ribosome where it forms part of the central protuberance. In Haemophilus influenzae (strain ATCC 51907 / DSM 11121 / KW20 / Rd), this protein is Large ribosomal subunit protein bL25.